We begin with the raw amino-acid sequence, 194 residues long: 7-methyl-GTP pyrophosphatase (194 aa).

The Proton acceptor role is filled by Asp70.

The protein belongs to the Maf family. YceF subfamily. A divalent metal cation serves as cofactor.

It is found in the cytoplasm. It carries out the reaction N(7)-methyl-GTP + H2O = N(7)-methyl-GMP + diphosphate + H(+). In terms of biological role, nucleoside triphosphate pyrophosphatase that hydrolyzes 7-methyl-GTP (m(7)GTP). May have a dual role in cell division arrest and in preventing the incorporation of modified nucleotides into cellular nucleic acids. The sequence is that of 7-methyl-GTP pyrophosphatase from Ralstonia nicotianae (strain ATCC BAA-1114 / GMI1000) (Ralstonia solanacearum).